The primary structure comprises 566 residues: Viral IRF3-like protein (566 aa).

2 disordered regions span residues 151–170 (PRPF…PAFC) and 176–236 (QTGA…VHTD).

It belongs to the IRF family. Interacts with host SKP2. Interacts with host USP7.

Functionally, plays a role in the inhibition of host immune response. Interferes with the transactivating potential of cellular IRFs IRF3 and IRF7 that play a critical role in the induction of IFNA and IFNB genes. Additionally, interferes with surface major histocompatibility complex class II (MHC-II) antigen presentation. This chain is Viral IRF3-like protein (vIRF-3), found in Human herpesvirus 8 type P (isolate GK18) (HHV-8).